We begin with the raw amino-acid sequence, 161 residues long: Nucleotide-binding protein Pcar_0033 (161 aa).

Belongs to the YajQ family.

In terms of biological role, nucleotide-binding protein. The polypeptide is Nucleotide-binding protein Pcar_0033 (Syntrophotalea carbinolica (strain DSM 2380 / NBRC 103641 / GraBd1) (Pelobacter carbinolicus)).